We begin with the raw amino-acid sequence, 353 residues long: uncharacterized protein (353 aa).

Positions 40, 70, 100, 103, 106, 114, and 158 each coordinate Zn(2+).

Belongs to the zinc-containing alcohol dehydrogenase family. Zn(2+) serves as cofactor.

This is an uncharacterized protein from Escherichia coli (strain K12).